A 263-amino-acid polypeptide reads, in one-letter code: Type III pantothenate kinase (263 aa).

D6 to K13 provides a ligand contact to ATP. Residue G108 to R111 participates in substrate binding. Residue D110 is the Proton acceptor of the active site. D131 serves as a coordination point for K(+). T134 contacts ATP. T187 lines the substrate pocket.

It belongs to the type III pantothenate kinase family. As to quaternary structure, homodimer. The cofactor is NH4(+). K(+) serves as cofactor.

The protein localises to the cytoplasm. It carries out the reaction (R)-pantothenate + ATP = (R)-4'-phosphopantothenate + ADP + H(+). The protein operates within cofactor biosynthesis; coenzyme A biosynthesis; CoA from (R)-pantothenate: step 1/5. In terms of biological role, catalyzes the phosphorylation of pantothenate (Pan), the first step in CoA biosynthesis. The polypeptide is Type III pantothenate kinase (Anaplasma phagocytophilum (strain HZ)).